Here is a 253-residue protein sequence, read N- to C-terminus: Phosphoadenosine 5'-phosphosulfate reductase (253 aa).

Cys239 serves as the catalytic Nucleophile; cysteine thiosulfonate intermediate.

It belongs to the PAPS reductase family. CysH subfamily.

The protein resides in the cytoplasm. The catalysed reaction is [thioredoxin]-disulfide + sulfite + adenosine 3',5'-bisphosphate + 2 H(+) = [thioredoxin]-dithiol + 3'-phosphoadenylyl sulfate. It participates in sulfur metabolism; hydrogen sulfide biosynthesis; sulfite from sulfate: step 3/3. Functionally, catalyzes the formation of sulfite from phosphoadenosine 5'-phosphosulfate (PAPS) using thioredoxin as an electron donor. The polypeptide is Phosphoadenosine 5'-phosphosulfate reductase (Photobacterium profundum (strain SS9)).